Reading from the N-terminus, the 367-residue chain is Protein RecA (367 aa).

A compositionally biased stretch (polar residues) spans 1–14 (MSTEVNANQSPNAE). The interval 1 to 24 (MSTEVNANQSPNAESRQEAARSGE) is disordered. A compositionally biased stretch (basic and acidic residues) spans 15–24 (SRQEAARSGE). 84 to 91 (GPESSGKT) provides a ligand contact to ATP. Residues 348–367 (GSEVSSNSMRPLTTANRKAA) form a disordered region. The segment covering 349–367 (SEVSSNSMRPLTTANRKAA) has biased composition (polar residues).

This sequence belongs to the RecA family.

The protein resides in the cytoplasm. Can catalyze the hydrolysis of ATP in the presence of single-stranded DNA, the ATP-dependent uptake of single-stranded DNA by duplex DNA, and the ATP-dependent hybridization of homologous single-stranded DNAs. It interacts with LexA causing its activation and leading to its autocatalytic cleavage. In Prochlorococcus marinus (strain MIT 9211), this protein is Protein RecA.